A 681-amino-acid polypeptide reads, in one-letter code: DNA ligase (681 aa).

NAD(+)-binding positions include 44–48, 94–95, and E124; these read DYIYD and SL. The active-site N6-AMP-lysine intermediate is the K126. The NAD(+) site is built by R147, E181, K297, and K321. 4 residues coordinate Zn(2+): C415, C418, C433, and C438. In terms of domain architecture, BRCT spans 598–681; it reads DETSFFYGKK…EAQAKEGTDK (84 aa).

The protein belongs to the NAD-dependent DNA ligase family. LigA subfamily. Mg(2+) is required as a cofactor. The cofactor is Mn(2+).

It carries out the reaction NAD(+) + (deoxyribonucleotide)n-3'-hydroxyl + 5'-phospho-(deoxyribonucleotide)m = (deoxyribonucleotide)n+m + AMP + beta-nicotinamide D-nucleotide.. In terms of biological role, DNA ligase that catalyzes the formation of phosphodiester linkages between 5'-phosphoryl and 3'-hydroxyl groups in double-stranded DNA using NAD as a coenzyme and as the energy source for the reaction. It is essential for DNA replication and repair of damaged DNA. The protein is DNA ligase of Leuconostoc citreum (strain KM20).